An 858-amino-acid polypeptide reads, in one-letter code: Rho GTPase-activating protein 17 (858 aa).

The BAR domain occupies 14–246; that stretch reads QTVGRAEKTE…MRAHQDKWAE (233 aa). The Rho-GAP domain occupies 252–442; the sequence is TPLEEHLKRS…PIIQHADWFF (191 aa). Polar residues predominate over residues 459-475; sequence TPNSNHSSHTGNDSDSG. Positions 459 to 482 are disordered; sequence TPNSNHSSHTGNDSDSGTLERKRP. At serine 484 the chain carries Phosphoserine. Positions 516–823 are disordered; the sequence is RKHISPAFQP…VTDTNSRVSE (308 aa). Polar residues predominate over residues 543 to 552; that stretch reads PSQSSRADSN. A compositionally biased stretch (low complexity) spans 553–563; that stretch reads SVGGPVPSSSG. A Phosphoserine modification is found at serine 575. A compositionally biased stretch (polar residues) spans 592–617; the sequence is RNSNQITTVPNQAQTGGNSHQLSVGT. The segment covering 637–650 has biased composition (pro residues); it reads APAPPKPGNPPPGH. The span at 653 to 702 shows a compositional bias: low complexity; the sequence is GQSSPGTGTSPKPSTRSPSPPQQQQQQQQQQQQQQQQQQQQQQQQQQQQQ. Phosphoserine occurs at positions 710 and 712. Pro residues-rich tracts occupy residues 716-729 and 738-756; these read IQAPNHPPPQPPTQ and EPGPTPPQTPTPPSTPPPA. Phosphothreonine occurs at positions 742, 746, and 748. The short motif at 742-755 is the SH3-binding element; it reads TPPQTPTPPSTPPP. Serine 751 carries the post-translational modification Phosphoserine. Threonine 752 bears the Phosphothreonine mark. The span at 757 to 769 shows a compositional bias: polar residues; it reads KQNSSQSETTQLH. Over residues 784 to 794 the composition is skewed to pro residues; that stretch reads RPSVPPPPNPP. The span at 806–823 shows a compositional bias: polar residues; sequence SVPTASRIVTDTNSRVSE.

Component of a complex whose core is composed of ARHGAP17, AMOT, PALS1, PATJ and PARD3/PAR3. Interacts with NHERF1, FNBP1, TRIP10, CAPZA (CAPZA1, CAPZA2 or CAPZA3), CAPZB, CD2AP and SH3KBP1/CIN85. In terms of tissue distribution, highly expressed in brain; neuron-specific (at protein level). Isoform 2, isoform 3 and isoform 4 are predominantly expressed in neuronal tissues and correlate well with the differentiation of neurons, while isoform 1 is strongly expressed in embryonic brain.

The protein localises to the membrane. The protein resides in the cytoplasm. It localises to the cell junction. It is found in the tight junction. Functionally, rho GTPase-activating protein involved in the maintenance of tight junction by regulating the activity of CDC42, thereby playing a central role in apical polarity of epithelial cells. Specifically acts as a GTPase activator for the CDC42 GTPase by converting it to an inactive GDP-bound state. The complex formed with AMOT acts by regulating the uptake of polarity proteins at tight junctions, possibly by deciding whether tight junction transmembrane proteins are recycled back to the plasma membrane or sent elsewhere. Participates in the Ca(2+)-dependent regulation of exocytosis, possibly by catalyzing GTPase activity of Rho family proteins and by inducing the reorganization of the cortical actin filaments. Acts as a GTPase activator in vitro for RAC1. This Rattus norvegicus (Rat) protein is Rho GTPase-activating protein 17 (Arhgap17).